A 618-amino-acid polypeptide reads, in one-letter code: Methylmalonyl-CoA mutase small subunit (618 aa).

The protein belongs to the methylmalonyl-CoA mutase family. In terms of assembly, heterodimer of an alpha and a beta chain. Adenosylcob(III)alamin is required as a cofactor.

It carries out the reaction (R)-methylmalonyl-CoA = succinyl-CoA. It participates in metabolic intermediate metabolism; propanoyl-CoA degradation; succinyl-CoA from propanoyl-CoA: step 3/3. Its function is as follows. Catalyzes the isomerization of succinyl-CoA to methylmalonyl-CoA during synthesis of propionate from tricarboxylic acid-cycle intermediates. The chain is Methylmalonyl-CoA mutase small subunit (mutA) from Porphyromonas gingivalis (strain ATCC BAA-308 / W83).